The sequence spans 198 residues: MAEKQTAKRNRREEILQSLALMLESSDGSQRITTAKLAASVGVSEAALYRHFPSKTRMFDSLIEFIEDSLITRINLILKDEKDTTARLRLIVLLLLGFGERNPGLTRILTGHALMFEQDRLQGRINQLFERIEAQLRQVLREKRMREGEGYATDETLLASQILAFCEGMLSRFVRSEFKYRPTDDFDARWPLIAAQLQ.

Residues 10 to 70 (NRREEILQSL…SLIEFIEDSL (61 aa)) form the HTH tetR-type domain. A DNA-binding region (H-T-H motif) is located at residues 33–52 (TTAKLAASVGVSEAALYRHF). Residues 117 to 144 (EQDRLQGRINQLFERIEAQLRQVLREKR) are a coiled coil.

This sequence belongs to the nucleoid occlusion factor SlmA family. In terms of assembly, homodimer. Interacts with FtsZ.

It localises to the cytoplasm. It is found in the nucleoid. Required for nucleoid occlusion (NO) phenomenon, which prevents Z-ring formation and cell division over the nucleoid. Acts as a DNA-associated cell division inhibitor that binds simultaneously chromosomal DNA and FtsZ, and disrupts the assembly of FtsZ polymers. SlmA-DNA-binding sequences (SBS) are dispersed on non-Ter regions of the chromosome, preventing FtsZ polymerization at these regions. This chain is Nucleoid occlusion factor SlmA, found in Escherichia coli O45:K1 (strain S88 / ExPEC).